The chain runs to 1470 residues: Niemann-Pick type C1-related protein (1470 aa).

The Cytoplasmic portion of the chain corresponds to 1–3 (MFV). The stretch at 4 to 34 (KNFIHKLKELKQKSLDKFANLLYDYGGYVYD) is an intramembrane region. Position 35 (arginine 35) is a topological domain, cytoplasmic. Residues 36–56 (PCTFIICSLICCLLLTCGFYF) traverse the membrane as a helical segment. At 57 to 493 (KEHEKDIYKL…DEVDRISKID (437 aa)) the chain is on the extracellular side. Residues asparagine 78, asparagine 165, asparagine 294, and asparagine 361 are each glycosylated (N-linked (GlcNAc...) asparagine). The helical transmembrane segment at 494–514 (NLTRLLLLIGVLLIFMYALFN) threads the bilayer. Residues 494 to 653 (NLTRLLLLIG…LTFLLSFLCI (160 aa)) enclose the SSD domain. Residues 515–524 (NVTSVLYRSK) are Cytoplasmic-facing. Residues 525-549 (PLCAVMGIFCGFLGFLSGSGFLYFL) form a helical membrane-spanning segment. Residues 550-554 (GVKSV) lie on the Extracellular side of the membrane. A helical transmembrane segment spans residues 555-582 (PPAETVPFLVIGVGVDDVFVILNSYSLL). At 583-587 (FMVKD) the chain is on the cytoplasmic side. The helical transmembrane segment at 588 to 619 (NKKRIQMCLKDSALAITVTTLTNIIAFLISAI) threads the bilayer. Topologically, residues 620–622 (SPF) are extracellular. Residues 623-659 (YSICAFSLFTASSLFFGYLMVLTFLLSFLCIEAKLEK) traverse the membrane as a helical segment. At 660–663 (KKRN) the chain is on the cytoplasmic side. Residues 664 to 673 (IFTGTFHLFR) lie within the membrane without spanning it. The Cytoplasmic segment spans residues 674 to 1057 (SIFMKSSKKN…IYEEPKGNIG (384 aa)). An intramembrane segment occupies 1058-1073 (KYFRSLVKNYYVPFLS). Serine 1074 is a topological domain (cytoplasmic). Residues 1075 to 1098 (RFGKTIVYIMFTIIIAMSIYGCTL) form a helical membrane-spanning segment. The Extracellular portion of the chain corresponds to 1099–1300 (MKKGIKYDKA…NHNVQMVCFH (202 aa)). N-linked (GlcNAc...) asparagine glycosylation is present at asparagine 1218. Residues 1301 to 1334 (LSSIFNETDESIIEVTLINLGITILTILVVTAYI) traverse the membrane as a helical segment. Residues 1335 to 1337 (IKG) lie on the Cytoplasmic side of the membrane. The helical transmembrane segment at 1338 to 1361 (FYSCVIIALIIFLIDLCIFGFMCL) threads the bilayer. The Extracellular portion of the chain corresponds to 1362–1367 (CGITMN). The helical transmembrane segment at 1368–1394 (IISMVILVLSVGFSIDHTSHIVQAFSH) threads the bilayer. The Cytoplasmic portion of the chain corresponds to 1395 to 1399 (SMGRT). A helical transmembrane segment spans residues 1400–1431 (RDEKMKESLHLMIGPVLHSGLSTWFVISTLFF). At 1432–1434 (SNK) the chain is on the extracellular side. A helical membrane pass occupies residues 1435 to 1466 (DFTVIFFQTLSLVLFFSITFSSMFLPVLLSSF). Residues 1467 to 1470 (GPLH) lie on the Cytoplasmic side of the membrane.

This sequence belongs to the patched family.

The protein localises to the cell membrane. The catalysed reaction is cholesterol(in) = cholesterol(out). Facilitates cholesterol efflux from membranes in a pH-dependent manner. Required for maintaining normal parasite plasma membrane lipid composition. Required for the proper functioning of digestive vacuole. Required for the viability of blood-stage parasites. In Plasmodium falciparum (isolate 3D7), this protein is Niemann-Pick type C1-related protein.